Consider the following 153-residue polypeptide: 6,7-dimethyl-8-ribityllumazine synthase (153 aa).

5-amino-6-(D-ribitylamino)uracil-binding positions include phenylalanine 22, alanine 56 to glutamate 58, and alanine 80 to isoleucine 82. A (2S)-2-hydroxy-3-oxobutyl phosphate-binding site is contributed by serine 85–threonine 86. Catalysis depends on histidine 88, which acts as the Proton donor. Phenylalanine 113 serves as a coordination point for 5-amino-6-(D-ribitylamino)uracil. Arginine 127 is a (2S)-2-hydroxy-3-oxobutyl phosphate binding site.

Belongs to the DMRL synthase family.

The catalysed reaction is (2S)-2-hydroxy-3-oxobutyl phosphate + 5-amino-6-(D-ribitylamino)uracil = 6,7-dimethyl-8-(1-D-ribityl)lumazine + phosphate + 2 H2O + H(+). The protein operates within cofactor biosynthesis; riboflavin biosynthesis; riboflavin from 2-hydroxy-3-oxobutyl phosphate and 5-amino-6-(D-ribitylamino)uracil: step 1/2. Its function is as follows. Catalyzes the formation of 6,7-dimethyl-8-ribityllumazine by condensation of 5-amino-6-(D-ribitylamino)uracil with 3,4-dihydroxy-2-butanone 4-phosphate. This is the penultimate step in the biosynthesis of riboflavin. The polypeptide is 6,7-dimethyl-8-ribityllumazine synthase (Clostridium botulinum (strain Eklund 17B / Type B)).